We begin with the raw amino-acid sequence, 781 residues long: Toll-like receptor 2 type-2 (781 aa).

The N-terminal stretch at 1 to 24 (MHTWKMWAICTALAAHLPEEQALR) is a signal peptide. Topologically, residues 25–585 (QACLSCDATQ…QLSLMECHRS (561 aa)) are extracellular. A disulfide bridge connects residues Cys-30 and Cys-36. N-linked (GlcNAc...) asparagine glycosylation is present at Asn-37. LRR repeat units lie at residues 53 to 74 (KITV…DLQK), 77 to 98 (NLRT…SFGS), 101 to 122 (KLEL…WFGP), 125 to 146 (SLQH…SPFS), 150 to 171 (NLSS…NFEG), and 174 to 195 (FLNT…SLKS). A glycan (N-linked (GlcNAc...) asparagine) is linked at Asn-109. 4 N-linked (GlcNAc...) asparagine glycosylation sites follow: Asn-150, Asn-184, Asn-301, and Asn-313. An intrachain disulfide couples Cys-350 to Cys-379. LRR repeat units lie at residues 358–378 (SLEY…EHSA), 385–406 (SLQT…GKSL), 411–432 (NLNL…CEWP), 434–455 (NLKY…IPST), 456–474 (LEVL…LQLP), 475–496 (FLKE…TDIP), and 497–518 (NLVA…EFES). A glycan (N-linked (GlcNAc...) asparagine) is linked at Asn-390. A disulfide bridge connects residues Cys-429 and Cys-451. Asn-439 is a glycosylation site (N-linked (GlcNAc...) asparagine). The 55-residue stretch at 530–584 (NNFICSCEFLSFIHHEAGIAQVLVGWPESYICDSPLTVRGAQVGSVQLSLMECHR) folds into the LRRCT domain. A helical membrane pass occupies residues 586 to 606 (LLVSLICTLVFLFILILVVVG). At 607 to 781 (YKYHAVWYMR…WENLKAALKS (175 aa)) the chain is on the cytoplasmic side. Residues 636–779 (ICYDAFVSYS…MFWENLKAAL (144 aa)) form the TIR domain.

This sequence belongs to the Toll-like receptor family. In terms of assembly, binds MYD88 (via TIR domain). In terms of processing, N-glycosylated. In terms of tissue distribution, highly expressed in ovary. Also detected in brain, heart, lung, liver, spleen and kidney, and at low levels in gizzard, muscle, testis and proventriculus.

Its subcellular location is the membrane. In terms of biological role, participates in the innate immune response to microbial agents. Acts via MYD88 and TRAF6, leading to NF-kappa-B activation, cytokine secretion and the inflammatory response. Mediates the response to mycoplasmal macrophage-activating lipopeptide-2kD (MALP-2). In Gallus gallus (Chicken), this protein is Toll-like receptor 2 type-2 (TLR2-2).